A 153-amino-acid chain; its full sequence is Endoribonuclease YbeY (153 aa).

Zn(2+) is bound by residues H118, H122, and H128.

Belongs to the endoribonuclease YbeY family. Zn(2+) is required as a cofactor.

It is found in the cytoplasm. In terms of biological role, single strand-specific metallo-endoribonuclease involved in late-stage 70S ribosome quality control and in maturation of the 3' terminus of the 16S rRNA. The protein is Endoribonuclease YbeY of Clostridioides difficile (strain 630) (Peptoclostridium difficile).